Consider the following 308-residue polypeptide: MKLLLILILIINNYNLCLSYECNSNRTYGLKGSSCEINADCLFPEVCFNSVCSKIRTTGESCTKKTDCTLTYDFGDCVNGKCEIIIATGDRCNPKVTSQKCSSSSECKNGICQLISACNSYNCPLNQYCDDKTKQCKPIPNDINSIVCKANSQCPTSHICTSSNKCIIKYSSKVGEKCTDSPLQCRVFNGEICNQETQKCIKNDQYFKQCEDESTCNGGLCVCLDDVNSKSVCVGPNGELNNEKCVNLEQKLEQCLINEKCNTLSPITCKCFKQFECFQYECNSVERFYNYKSNYYQSLNCSRFLTKP.

The signal sequence occupies residues 1–19 (MKLLLILILIINNYNLCLS). N-linked (GlcNAc...) asparagine glycosylation is found at Asn-25 and Asn-300.

Its subcellular location is the secreted. This is an uncharacterized protein from Dictyostelium discoideum (Social amoeba).